We begin with the raw amino-acid sequence, 357 residues long: Putative ankyrin repeat protein L42 (357 aa).

ANK repeat units lie at residues 34–63, 86–115, 116–145, 147–175, 176–205, 206–235, 237–265, 267–294, and 301–331; these read SCKQ…NLKF, EQNE…DFRM, NDDE…NIRA, NNRP…SFVS, KQNE…DINV, GKIP…SINK, SVDS…EVNI, YYAF…ITKD, and NTRY…DKDK.

The polypeptide is Putative ankyrin repeat protein L42 (Acanthamoeba polyphaga (Amoeba)).